The primary structure comprises 436 residues: UDP-N-acetylmuramate--L-alanine ligase (436 aa).

Residue 110–116 participates in ATP binding; that stretch reads GAHGKTS.

The protein belongs to the MurCDEF family.

It localises to the cytoplasm. The enzyme catalyses UDP-N-acetyl-alpha-D-muramate + L-alanine + ATP = UDP-N-acetyl-alpha-D-muramoyl-L-alanine + ADP + phosphate + H(+). The protein operates within cell wall biogenesis; peptidoglycan biosynthesis. Functionally, cell wall formation. The chain is UDP-N-acetylmuramate--L-alanine ligase from Lacticaseibacillus casei (strain BL23) (Lactobacillus casei).